We begin with the raw amino-acid sequence, 160 residues long: Cytochrome b6-f complex subunit 4 (160 aa).

Transmembrane regions (helical) follow at residues 36 to 56 (LLYM…GLAV), 95 to 115 (LLGV…PFIE), and 131 to 151 (TVFL…CLPI).

This sequence belongs to the cytochrome b family. PetD subfamily. In terms of assembly, the 4 large subunits of the cytochrome b6-f complex are cytochrome b6, subunit IV (17 kDa polypeptide, petD), cytochrome f and the Rieske protein, while the 4 small subunits are petG, petL, petM and petN. The complex functions as a dimer.

Its subcellular location is the plastid. The protein localises to the chloroplast thylakoid membrane. Functionally, component of the cytochrome b6-f complex, which mediates electron transfer between photosystem II (PSII) and photosystem I (PSI), cyclic electron flow around PSI, and state transitions. In Tupiella akineta (Green alga), this protein is Cytochrome b6-f complex subunit 4.